A 182-amino-acid chain; its full sequence is Caltractin ICL1b (182 aa).

Residues M1–V31 are disordered. EF-hand domains lie at E38–E73, A74–E109, D111–T146, and M147–A182. Positions 51, 53, 55, 57, 62, 87, 89, 91, 93, and 98 each coordinate Ca(2+).

This sequence belongs to the centrin family.

The protein resides in the cytoplasm. Its subcellular location is the cytoskeleton. Functionally, plays a fundamental role in microtubule organizing center structure and function. Component of the infraciliary lattice (ICL) and the ciliary basal bodies. The sequence is that of Caltractin ICL1b (Icl1b) from Paramecium tetraurelia.